A 1032-amino-acid chain; its full sequence is uncharacterized protein (1032 aa).

Residues M1–P17 lie on the Cytoplasmic side of the membrane. Residues V18 to S36 traverse the membrane as a helical segment. Over K37–E337 the chain is Periplasmic. The chain crosses the membrane as a helical span at residues V338 to I357. The Cytoplasmic segment spans residues G358–I363. A helical transmembrane segment spans residues L364–S383. At F384–N389 the chain is on the periplasmic side. A helical transmembrane segment spans residues L390–L411. At E412 to P438 the chain is on the cytoplasmic side. Residues V439–G457 form a helical membrane-spanning segment. Residues G458 to T470 are Periplasmic-facing. The helical transmembrane segment at L471 to L493 threads the bilayer. The Cytoplasmic segment spans residues L494–R529. The helical transmembrane segment at K530–N548 threads the bilayer. Residues S549–A852 lie on the Periplasmic side of the membrane. Residues L853–F872 traverse the membrane as a helical segment. At E873–P878 the chain is on the cytoplasmic side. The helical transmembrane segment at M879–I898 threads the bilayer. At L899–N910 the chain is on the periplasmic side. Residues I911 to C932 traverse the membrane as a helical segment. At E933–P960 the chain is on the cytoplasmic side. The chain crosses the membrane as a helical span at residues I961–T979. Topologically, residues G980–V992 are periplasmic. The chain crosses the membrane as a helical span at residues I993–V1015. Residues A1016–H1032 are Cytoplasmic-facing.

This sequence belongs to the resistance-nodulation-cell division (RND) (TC 2.A.6) family.

Its subcellular location is the cell inner membrane. Functionally, could be a drug efflux pump. This is an uncharacterized protein from Haemophilus influenzae (strain ATCC 51907 / DSM 11121 / KW20 / Rd).